Consider the following 669-residue polypeptide: Gametogenetin-binding protein 2 (669 aa).

Disordered stretches follow at residues 375-421 (QEKK…GNPC) and 452-475 (PHSN…SQEG). Residues 376 to 388 (EKKRQKKNRKKNK) show a composition bias toward basic residues. Over residues 398–408 (ETKSANPSQKN) the composition is skewed to polar residues.

Its subcellular location is the cytoplasm. May be involved in spermatogenesis. This chain is Gametogenetin-binding protein 2 (ggnbp2), found in Xenopus tropicalis (Western clawed frog).